Reading from the N-terminus, the 513-residue chain is ATP synthase subunit alpha (513 aa).

ATP is bound at residue 169-176 (GDRQTGKT).

The protein belongs to the ATPase alpha/beta chains family. In terms of assembly, F-type ATPases have 2 components, CF(1) - the catalytic core - and CF(0) - the membrane proton channel. CF(1) has five subunits: alpha(3), beta(3), gamma(1), delta(1), epsilon(1). CF(0) has three main subunits: a(1), b(2) and c(9-12). The alpha and beta chains form an alternating ring which encloses part of the gamma chain. CF(1) is attached to CF(0) by a central stalk formed by the gamma and epsilon chains, while a peripheral stalk is formed by the delta and b chains.

The protein resides in the cell inner membrane. It carries out the reaction ATP + H2O + 4 H(+)(in) = ADP + phosphate + 5 H(+)(out). Functionally, produces ATP from ADP in the presence of a proton gradient across the membrane. The alpha chain is a regulatory subunit. In Salmonella paratyphi C (strain RKS4594), this protein is ATP synthase subunit alpha.